A 344-amino-acid chain; its full sequence is Follistatin (344 aa).

The signal sequence occupies residues 1 to 29; the sequence is MVRPRHQPGGLCLLLLLLCQFMEDRSAQA. One can recognise a TB domain in the interval 30-103; the sequence is GNCWLRQAKN…TCDNVDCGPG (74 aa). 18 disulfide bridges follow: Cys-32–Cys-55, Cys-42–Cys-88, Cys-56–Cys-91, Cys-95–Cys-106, Cys-100–Cys-116, Cys-118–Cys-150, Cys-122–Cys-143, Cys-132–Cys-164, Cys-168–Cys-179, Cys-173–Cys-189, Cys-192–Cys-225, Cys-196–Cys-218, Cys-207–Cys-239, Cys-245–Cys-256, Cys-250–Cys-267, Cys-270–Cys-302, Cys-274–Cys-295, and Cys-284–Cys-316. The Follistatin-like 1 domain occupies 94–117; sequence TCDNVDCGPGKKCRMNKKNKPRCV. A Kazal-like 1 domain is found at 112-166; that stretch reads NKPRCVCAPDCSNITWKGPVCGLDGKTYRNECALLKARCKEQPELEVQYQGKCKK. Asn-124 is a glycosylation site (N-linked (GlcNAc...) asparagine). Residues 167–190 enclose the Follistatin-like 2 domain; sequence TCRDVNCPGSSTCVVDQTNNAYCV. In terms of domain architecture, Kazal-like 2 spans 186–241; that stretch reads NAYCVTCNRICPEPTSSEQYLCGNDGVTYSSACHLRKATCLLGRSIGLAYEGKCIK. The region spanning 244-268 is the Follistatin-like 3 domain; it reads SCEDIQCTGGKKCLWDFKVGRGRCS. One can recognise a Kazal-like 3 domain in the interval 264–318; that stretch reads RGRCSLCDELCPDSKSEEPVCASDNATYASECAMKEAACSSGVLLEVKHSGSCNS. N-linked (GlcNAc...) asparagine glycosylation is present at Asn-288. The interval 314–344 is disordered; it reads GSCNSISEDTEEEEEDEDQDYSFPISSILEW. Residues 321–333 show a composition bias toward acidic residues; the sequence is EDTEEEEEDEDQD.

Interacts with GDF11. Interacts with activin A/INHBA. Interacts with myostatin/MSTN.

The protein resides in the secreted. The protein localises to the nucleus. It localises to the nucleolus. In terms of biological role, multifunctional regulatory protein whose primary function is to antagonize members of the transforming growth factor beta (TGF-beta) superfamily including activin, myostatin, GDF11 or bone morphogenetic proteins (BMPs). Mechanistically, binds to these ligands in the extracellular space, blocking their type II receptor-binding site to inhibit downstream signaling. Plays an essential role in muscle fiber formation and growth both by preventing the repressive effects of myostatin and through SMAD3/AKT/mTOR signaling independently of myostatin. Also promotes neural differentiation by antagonizing the action BMP4. Acts as a specific inhibitor of the biosynthesis and secretion of pituitary follicle stimulating hormone (FSH) by sequestering activin A/INHBA. On the other hand, translocates into the nucleus where it down-regulates rRNA synthesis and ribosome biogenesis to maintain cellular energy homeostasis by binding to rDNA. The chain is Follistatin from Equus caballus (Horse).